A 414-amino-acid polypeptide reads, in one-letter code: Protein DNA-DAMAGE INDUCIBLE 1 (414 aa).

The region spanning 1-76 (MRITVMTAGE…LMMMVSNASS (76 aa)) is the Ubiquitin-like domain. Residues 213 to 292 (LKAFVDSGAQ…NMEFLFGLDM (80 aa)) form the Peptidase A2 domain. Residue Asp-218 is part of the active site. Residues 332 to 374 (ERVPNDASSSGATVPSGFTEKKNNTVANPTSQQPKRQNTSEGP) form a disordered region. The span at 355-372 (NTVANPTSQQPKRQNTSE) shows a compositional bias: polar residues. The UBA domain maps to 374-414 (PEFEAKIAKLVELGFSRDSVIQALKLFEGNEEQAAGFLFGG).

Belongs to the DDI1 family. In terms of assembly, homodimer.

It localises to the cytoplasm. The protein resides in the cytosol. Its function is as follows. Receptor of ubiquitinated protein targeted to ubiquitin/proteasome-mediated proteolysis (UPP). Relatively weak affinity for both 'Lys-48'- and 'Lys-63'-linked ubiquitin chains with a slight preference for 'Lys-48-'linked chains of three or more ubiquitin units. The polypeptide is Protein DNA-DAMAGE INDUCIBLE 1 (Arabidopsis thaliana (Mouse-ear cress)).